We begin with the raw amino-acid sequence, 123 residues long: MEPAEQPSELVSAEGRNRKAVLCQRCGSRVLQPGTALFSRRQLFLPSMRKKPALSDGSNPDGDLLQEHWLVEDMFIFENVGFTKDVGNIKFLVCADCEIGPIGWHCLDDKNSFYVALERVSHE.

Residue M1 is modified to N-acetylmethionine. Residues 9–123 form the MSS4 domain; sequence ELVSAEGRNR…YVALERVSHE (115 aa). Zn(2+) contacts are provided by C23, C26, C94, and C97.

The protein belongs to the DSS4/MSS4 family. In terms of assembly, interacts with RAB8A. In terms of tissue distribution, ubiquitous.

Functionally, guanine-nucleotide-releasing protein that acts on members of the SEC4/YPT1/RAB subfamily. Stimulates GDP release from both YPT1, RAB3A and RAB10, but is less active on these proteins than on the SEC4 protein. Might play a general role in vesicular transport. The polypeptide is Guanine nucleotide exchange factor MSS4 (RABIF) (Homo sapiens (Human)).